The chain runs to 78 residues: Acyl carrier protein (78 aa).

In terms of domain architecture, Carrier spans 2 to 77; that stretch reads SDIAERVKKI…DAVKFIEKAQ (76 aa). Ser37 bears the O-(pantetheine 4'-phosphoryl)serine mark.

This sequence belongs to the acyl carrier protein (ACP) family. In terms of processing, 4'-phosphopantetheine is transferred from CoA to a specific serine of apo-ACP by AcpS. This modification is essential for activity because fatty acids are bound in thioester linkage to the sulfhydryl of the prosthetic group.

The protein localises to the cytoplasm. It participates in lipid metabolism; fatty acid biosynthesis. Functionally, carrier of the growing fatty acid chain in fatty acid biosynthesis. The chain is Acyl carrier protein from Sinorhizobium fredii (strain NBRC 101917 / NGR234).